The sequence spans 132 residues: MISITEWQKIGVGITGFGIFFILFGTLLYFDSVLLAFGNLLFLTGLSLIIGLRKTFWFFFQRHKLKGTSFLLGGVVIVLLRWPLLGMFLETYGFFSLFKGFFPVAFGFLGNVCNIPFLGALFRRLQGTSSMV.

Over Met1 to Lys9 the chain is Cytoplasmic. The helical transmembrane segment at Ile10–Phe30 threads the bilayer. A topological domain (lumenal) is located at residue Asp31. Residues Ser32–Leu52 form a helical membrane-spanning segment. Over Arg53 to Thr68 the chain is Cytoplasmic. The helical transmembrane segment at Ser69–Leu89 threads the bilayer. The Lumenal portion of the chain corresponds to Glu90–Gly100. A helical transmembrane segment spans residues Phe101 to Leu121. Residues Phe122–Val132 lie on the Cytoplasmic side of the membrane.

Belongs to the GOT1 family.

The protein localises to the golgi apparatus membrane. May be involved in fusion of ER-derived transport vesicles with the Golgi complex. The sequence is that of Vesicle transport protein GOT1A from Homo sapiens (Human).